The following is a 162-amino-acid chain: MSVVNRRIAVYPGTFDPITNGHIDLVSRAAPLFESVVVGVAQSPSKGPSLPLQQRVTLAREALCQHENVQVIGFDTLLAHFVRHVGAGVLLRGLRAVSDFEYEFQMASMNRHLIPEVETLFLTPAEQHSFISSSLVREIARLGGDVSGFAPAAVVAALRQNL.

A substrate-binding site is contributed by T14. Residues 14 to 15 (TF) and H22 each bind ATP. Residues K46, L78, and R92 each coordinate substrate. ATP contacts are provided by residues 93–95 (GLR), E103, and 128–134 (HSFISSS).

It belongs to the bacterial CoaD family. As to quaternary structure, homohexamer. The cofactor is Mg(2+).

It localises to the cytoplasm. The catalysed reaction is (R)-4'-phosphopantetheine + ATP + H(+) = 3'-dephospho-CoA + diphosphate. The protein operates within cofactor biosynthesis; coenzyme A biosynthesis; CoA from (R)-pantothenate: step 4/5. Functionally, reversibly transfers an adenylyl group from ATP to 4'-phosphopantetheine, yielding dephospho-CoA (dPCoA) and pyrophosphate. The protein is Phosphopantetheine adenylyltransferase of Xylella fastidiosa (strain M23).